A 386-amino-acid chain; its full sequence is MKIHEYQGKEILRSFGVPVPRGIPAFTVQEAVEAAQKLGGPVWVVKAQIHAGGRGKGGGVKVAKTIDDVKARASEILGMQLVTHQTGPEGQKVRRLYIEDGADIKNELYVSLVTDRGTQKVALIASSEGGMDIEEVAHSTPEKIITEMIDPLTGITPEQSKKVAAAIGLTGASVDQAVDLFAKLYKCYMDTDASLVEINPLNCDSKGNLMALDAKFNFDANALFRHPEIVALRDLDEEDPAEVEASKFDLAYISLDGNIGCLVNGAGLAMATMDTIKLFGGEPANFLDVGGGATPEKVTEAFKIMLKNPKVKGILVNIFGGIMKCDTIATGVITACKAVNLQVPLVVRMKGTNEELGKKMLAESGLPIISADTMAEAATKIVEAVR.

An ATP-grasp domain is found at 9 to 244; it reads KEILRSFGVP…LDEEDPAEVE (236 aa). Residues lysine 46, 53–55, glutamate 99, alanine 102, and glutamate 107 each bind ATP; that span reads GRG. Mg(2+) contacts are provided by asparagine 199 and aspartate 213. Substrate is bound by residues asparagine 264 and 321 to 323; that span reads GIM.

The protein belongs to the succinate/malate CoA ligase beta subunit family. Heterotetramer of two alpha and two beta subunits. The cofactor is Mg(2+).

The enzyme catalyses succinate + ATP + CoA = succinyl-CoA + ADP + phosphate. The catalysed reaction is GTP + succinate + CoA = succinyl-CoA + GDP + phosphate. The protein operates within carbohydrate metabolism; tricarboxylic acid cycle; succinate from succinyl-CoA (ligase route): step 1/1. Functionally, succinyl-CoA synthetase functions in the citric acid cycle (TCA), coupling the hydrolysis of succinyl-CoA to the synthesis of either ATP or GTP and thus represents the only step of substrate-level phosphorylation in the TCA. The beta subunit provides nucleotide specificity of the enzyme and binds the substrate succinate, while the binding sites for coenzyme A and phosphate are found in the alpha subunit. The chain is Succinate--CoA ligase [ADP-forming] subunit beta from Acidovorax ebreus (strain TPSY) (Diaphorobacter sp. (strain TPSY)).